The primary structure comprises 332 residues: uncharacterized protein (332 aa).

The interval 159-256 (PLEISGRGGN…PRPHPWGPGP (98 aa)) is disordered. The span at 201-231 (RPPSPRPPSPRPPHPRPPSPRPPHPRPPSPR) shows a compositional bias: pro residues.

Its subcellular location is the virion. This is an uncharacterized protein from Acanthamoeba polyphaga (Amoeba).